The sequence spans 312 residues: Beta-ketoacyl-[acyl-carrier-protein] synthase III (312 aa).

Active-site residues include Cys-112 and His-237. Residues Gln-238–Arg-242 are ACP-binding. Residue Asn-267 is part of the active site.

The protein belongs to the thiolase-like superfamily. FabH family. As to quaternary structure, homodimer.

It localises to the cytoplasm. It catalyses the reaction malonyl-[ACP] + acetyl-CoA + H(+) = 3-oxobutanoyl-[ACP] + CO2 + CoA. It functions in the pathway lipid metabolism; fatty acid biosynthesis. In terms of biological role, catalyzes the condensation reaction of fatty acid synthesis by the addition to an acyl acceptor of two carbons from malonyl-ACP. Catalyzes the first condensation reaction which initiates fatty acid synthesis and may therefore play a role in governing the total rate of fatty acid production. Possesses both acetoacetyl-ACP synthase and acetyl transacylase activities. Its substrate specificity determines the biosynthesis of branched-chain and/or straight-chain of fatty acids. The protein is Beta-ketoacyl-[acyl-carrier-protein] synthase III of Bacillus pumilus (strain SAFR-032).